The following is a 256-amino-acid chain: Deoxyribose-phosphate aldolase (256 aa).

Residue Asp-102 is the Proton donor/acceptor of the active site. The active-site Schiff-base intermediate with acetaldehyde is Lys-165. The Proton donor/acceptor role is filled by Lys-197.

It belongs to the DeoC/FbaB aldolase family. DeoC type 2 subfamily.

The protein resides in the cytoplasm. The enzyme catalyses 2-deoxy-D-ribose 5-phosphate = D-glyceraldehyde 3-phosphate + acetaldehyde. It participates in carbohydrate degradation; 2-deoxy-D-ribose 1-phosphate degradation; D-glyceraldehyde 3-phosphate and acetaldehyde from 2-deoxy-alpha-D-ribose 1-phosphate: step 2/2. Functionally, catalyzes a reversible aldol reaction between acetaldehyde and D-glyceraldehyde 3-phosphate to generate 2-deoxy-D-ribose 5-phosphate. In Shewanella sp. (strain ANA-3), this protein is Deoxyribose-phosphate aldolase.